We begin with the raw amino-acid sequence, 229 residues long: Protein fmp52-2, mitochondrial (229 aa).

Residues 1–45 constitute a mitochondrion transit peptide; the sequence is MTTAAVFGSTGAVGGQILATLLASDAFSSVKTVSRRLPNAQSPKL.

Belongs to the FMP52 family.

The protein localises to the mitochondrion outer membrane. The sequence is that of Protein fmp52-2, mitochondrial (fmp522) from Aspergillus oryzae (strain ATCC 42149 / RIB 40) (Yellow koji mold).